A 65-amino-acid polypeptide reads, in one-letter code: Large ribosomal subunit protein bL35 (65 aa).

Belongs to the bacterial ribosomal protein bL35 family.

The chain is Large ribosomal subunit protein bL35 from Thermoanaerobacter sp. (strain X514).